The sequence spans 104 residues: Large ribosomal subunit protein bL21 (104 aa).

This sequence belongs to the bacterial ribosomal protein bL21 family. Part of the 50S ribosomal subunit. Contacts protein L20.

Functionally, this protein binds to 23S rRNA in the presence of protein L20. In Moorella thermoacetica (strain ATCC 39073 / JCM 9320), this protein is Large ribosomal subunit protein bL21.